The primary structure comprises 621 residues: E3 SUMO-protein ligase PIAS2 (621 aa).

Residues 11–45 form the SAP domain; that stretch reads VSSFRVSELQVLLGFAGRNKSGRKHDLLMRALHLL. The LXXLL motif signature appears at 19–23; that stretch reads LQVLL. Glycyl lysine isopeptide (Lys-Gly) (interchain with G-Cter in SUMO2) cross-links involve residues lysine 46 and lysine 249. Residues 134-299 form the PINIT domain; the sequence is QPSPPIPPVH…SMSVYLVRQL (166 aa). An SP-RING-type zinc finger spans residues 331–412; it reads PDSEIATTSL…FMEILNDCSD (82 aa). Residues cysteine 362, histidine 364, cysteine 385, and cysteine 388 each contribute to the Zn(2+) site. Glycyl lysine isopeptide (Lys-Gly) (interchain with G-Cter in SUMO2) cross-links involve residues lysine 430, lysine 435, lysine 443, and lysine 452. Residues 467–473 are SUMO1-binding; sequence VDVIDLT. 3 positions are modified to phosphoserine: serine 476, serine 477, and serine 478. Positions 484–492 match the Nuclear localization signal motif; that stretch reads PPAKRKCIF. A Glycyl lysine isopeptide (Lys-Gly) (interchain with G-Cter in SUMO2) cross-link involves residue lysine 489. The residue at position 499 (serine 499) is a Phosphoserine. Residues lysine 502 and glutamine 562 each participate in a glycyl lysine isopeptide (Lys-Gly) (interchain with G-Cter in SUMO2) cross-link. The span at 579-610 shows a compositional bias: low complexity; it reads SSTSVTTTSSHESSTHVSSSSSRSETGVITSS. The tract at residues 579–621 is disordered; that stretch reads SSTSVTTTSSHESSTHVSSSSSRSETGVITSSGSNIPDIISLD.

Belongs to the PIAS family. Binds SUMO1 and UBE2I. Interacts with AXIN1, JUN, MDM2, PARK7, TP53 and TP73 isoform alpha, but not TP73 isoform beta. Interacts with STAT4 following IL12 and IFN-alpha stimulation of T-cells. Interacts also with GTF2I, GTF2IRD1, IKFZ1, DAB2 and MSX2, as well as with several steroid receptors, including ESR1, ESR2, NR3C1, PGR, AR, and with NCOA2. Sumoylation of a target protein seems to enhance the interaction. Binds to sumoylated ELK1. Binds DNA, such as CDKN1A promoter, in a sequence-specific manner. Interacts with PLAG1. Interacts with KLF8; the interaction results in SUMO ligation and repression of KLF8 transcriptional activity and of its cell cycle progression into G(1) phase. PIAS2-beta interacts with IFIH1/MDA5. Isoform PIAS2-alpha interacts with PML (isoform PML-12). Interacts with PRDM1/Blimp-1. Post-translationally, sumoylated. In terms of tissue distribution, mainly expressed in testis. Isoform 3 is expressed predominantly in adult testis, weakly in pancreas, embryonic testis and sperm, and at very low levels in other organs.

The protein resides in the nucleus speckle. It is found in the nucleus. It localises to the PML body. It participates in protein modification; protein sumoylation. Functions as an E3-type small ubiquitin-like modifier (SUMO) ligase, stabilizing the interaction between UBE2I and the substrate, and as a SUMO-tethering factor. Plays a crucial role as a transcriptional coregulator in various cellular pathways, including the STAT pathway, the p53 pathway and the steroid hormone signaling pathway. The effects of this transcriptional coregulation, transactivation or silencing may vary depending upon the biological context and the PIAS2 isoform studied. However, it seems to be mostly involved in gene silencing. Binds to sumoylated ELK1 and enhances its transcriptional activity by preventing recruitment of HDAC2 by ELK1, thus reversing SUMO-mediated repression of ELK1 transactivation activity. Isoform PIAS2-beta, but not isoform PIAS2-alpha, promotes MDM2 sumoylation. Isoform PIAS2-alpha promotes PARK7 sumoylation. Isoform PIAS2-beta promotes NCOA2 sumoylation more efficiently than isoform PIAS2-alpha. Isoform PIAS2-alpha sumoylates PML at'Lys-65' and 'Lys-160'. This is E3 SUMO-protein ligase PIAS2 (PIAS2) from Homo sapiens (Human).